Consider the following 192-residue polypeptide: 7-methyl-GTP pyrophosphatase (192 aa).

D69 serves as the catalytic Proton acceptor.

This sequence belongs to the Maf family. YceF subfamily. The cofactor is a divalent metal cation.

The protein resides in the cytoplasm. The enzyme catalyses N(7)-methyl-GTP + H2O = N(7)-methyl-GMP + diphosphate + H(+). In terms of biological role, nucleoside triphosphate pyrophosphatase that hydrolyzes 7-methyl-GTP (m(7)GTP). May have a dual role in cell division arrest and in preventing the incorporation of modified nucleotides into cellular nucleic acids. This Methylobacillus flagellatus (strain ATCC 51484 / DSM 6875 / VKM B-1610 / KT) protein is 7-methyl-GTP pyrophosphatase.